The following is a 633-amino-acid chain: UvrABC system protein C (633 aa).

The GIY-YIG domain occupies 21-100; that stretch reads TDPGVYKFLD…IKELQPRYNV (80 aa). A UVR domain is found at 214–249; that stretch reads QELMDLLKDEMQRQSDAHNFEEAARLRDQVKALKDY.

Belongs to the UvrC family. As to quaternary structure, interacts with UvrB in an incision complex.

It is found in the cytoplasm. The UvrABC repair system catalyzes the recognition and processing of DNA lesions. UvrC both incises the 5' and 3' sides of the lesion. The N-terminal half is responsible for the 3' incision and the C-terminal half is responsible for the 5' incision. The protein is UvrABC system protein C of Salinibacter ruber (strain DSM 13855 / M31).